Here is a 231-residue protein sequence, read N- to C-terminus: Large ribosomal subunit protein uL1 (231 aa).

Belongs to the universal ribosomal protein uL1 family. In terms of assembly, part of the 50S ribosomal subunit.

Functionally, binds directly to 23S rRNA. The L1 stalk is quite mobile in the ribosome, and is involved in E site tRNA release. Protein L1 is also a translational repressor protein, it controls the translation of the L11 operon by binding to its mRNA. This chain is Large ribosomal subunit protein uL1, found in Ralstonia pickettii (strain 12J).